Here is a 20-residue protein sequence, read N- to C-terminus: Implantin (20 aa).

It belongs to the EF-1-beta/EF-1-delta family. Post-translationally, phosphorylated. In terms of tissue distribution, uterus and embryo.

The protein resides in the cytoplasm. Its subcellular location is the nucleus. In terms of biological role, binds DNA. This is Implantin from Mus musculus (Mouse).